A 116-amino-acid chain; its full sequence is Large ribosomal subunit protein bL19 (116 aa).

The protein belongs to the bacterial ribosomal protein bL19 family.

In terms of biological role, this protein is located at the 30S-50S ribosomal subunit interface and may play a role in the structure and function of the aminoacyl-tRNA binding site. The sequence is that of Large ribosomal subunit protein bL19 from Staphylococcus saprophyticus subsp. saprophyticus (strain ATCC 15305 / DSM 20229 / NCIMB 8711 / NCTC 7292 / S-41).